Here is an 888-residue protein sequence, read N- to C-terminus: E3 ubiquitin-protein ligase SH3RF1 (888 aa).

The RING-type zinc finger occupies 12 to 53; it reads CPVCLERLDASAKVLPCQHTFCKRCLLGIVGSRNELRCPECR. SH3 domains lie at 134-193 and 196-259; these read PQLP…IIKP and QPPP…FNSA. The disordered stretch occupies residues 275 to 321; it reads DAGECSSAAAQSSTAPKHSDTKKNTKKRHSFTSLTMANKSSQASQNR. Residues 292–362 are interaction with RAC1; sequence HSDTKKNTKK…APSQVHISTT (71 aa). S304 carries the post-translational modification Phosphoserine. Residues 305–321 are compositionally biased toward polar residues; it reads FTSLTMANKSSQASQNR. The segment at 440 to 543 is interaction with AKT2; sequence HLRPQTRPSV…STAGGPAQKL (104 aa). One can recognise an SH3 3 domain in the interval 445-506; it reads TRPSVYVAIY…PGNYVAPVTR (62 aa). 3 disordered regions span residues 516–549, 617–637, and 693–741; these read VPMS…NGVA, SPAS…APLM, and PDSA…ASPT. Over residues 520–535 the composition is skewed to polar residues; the sequence is TAGQTSRGVTMVSPST. Phosphoserine is present on S532. Positions 693-704 are enriched in polar residues; sequence PDSASLACGNSS. The span at 707–718 shows a compositional bias: basic and acidic residues; the sequence is KPDKDSKKEKKG. S735 carries the phosphoserine modification. Positions 829–888 constitute an SH3 4 domain; sequence VVCERHRVVVSYPPQSEAELELKEGDIVFVHKKREDGWFKGTLQRNGKTGLFPGSFVENI.

It belongs to the SH3RF family. As to quaternary structure, interacts with HERP1. Interacts with RAC1; in a GTP-dependent manner. Interacts with MAP3K10/MLK2 and MAP3K11/MLK3. Interacts with MAPK8IP; this interaction leads to the PJAC complex (POSH-JIP or SH3RF1/MAPK8IP apoptotic complex) with a 1:1 ratio. Interacts with SIAH1. Probably part of a signaling complex that may contain SH3RF1, MAPK8IP, DLK1, MAP2K4/MKK4, MAP2K7/MKK7, MAPK8/JNK1, MAPK9/JNK2, AKT1 and AKT2. Found in a complex with RAC2, MAP3K7/TAK1, MAP2K7/MKK7, MAPK8IP1/JIP1, MAPK8/JNK1 and MAPK9/JNK2. Found in a complex with RAC1, MAP3K11/MLK3, MAP2K7/MKK7, MAPK8IP1/JIP1 and MAPK8/JNK1. Interacts with SH3RF2. In terms of processing, phosphorylated at Ser-304 by AKT1 and AKT2. When phosphorylated, it has reduced ability to bind Rac. Autoubiquitinated. Ubiquitinated by SH3RF2, leading to proteasome-mediated degradation.

Its subcellular location is the cytoplasm. It is found in the perinuclear region. It localises to the cell projection. The protein localises to the lamellipodium. The protein resides in the golgi apparatus. Its subcellular location is the trans-Golgi network. It catalyses the reaction S-ubiquitinyl-[E2 ubiquitin-conjugating enzyme]-L-cysteine + [acceptor protein]-L-lysine = [E2 ubiquitin-conjugating enzyme]-L-cysteine + N(6)-ubiquitinyl-[acceptor protein]-L-lysine.. It functions in the pathway protein modification; protein ubiquitination. Functionally, has E3 ubiquitin-protein ligase activity. In the absence of an external substrate, it can catalyze self-ubiquitination. Stimulates ubiquitination of potassium channel KCNJ1, enhancing it's dynamin-dependent and clathrin-independent endocytosis. Acts as a scaffold protein that coordinates with MAPK8IP1/JIP1 in organizing different components of the JNK pathway, including RAC1 or RAC2, MAP3K11/MLK3 or MAP3K7/TAK1, MAP2K7/MKK7, MAPK8/JNK1 and/or MAPK9/JNK2 into a functional multiprotein complex to ensure the effective activation of the JNK signaling pathway. Regulates the differentiation of CD4(+) and CD8(+) T-cells and promotes T-helper 1 (Th1) cell differentiation. Regulates the activation of MAPK8/JNK1 and MAPK9/JNK2 in CD4(+) T-cells and the activation of MAPK8/JNK1 in CD8(+) T-cells. Controls proper cortical neuronal migration and the formation of proximal cytoplasmic dilation in the leading process (PCDLP) in migratory neocortical neurons by regulating the proper localization of activated RAC1 and F-actin assembly. This chain is E3 ubiquitin-protein ligase SH3RF1 (SH3RF1), found in Pongo abelii (Sumatran orangutan).